A 117-amino-acid chain; its full sequence is NADH-ubiquinone oxidoreductase chain 3 (117 aa).

The next 3 helical transmembrane spans lie at 4–24, 61–81, and 86–106; these read FLGILIYFFIALALSLLLLGL, LVAILFIIFDLEVAFLFPWAL, and IGYFGFWSMMLFLFILTVGFI.

It belongs to the complex I subunit 3 family.

It localises to the mitochondrion membrane. It carries out the reaction a ubiquinone + NADH + 5 H(+)(in) = a ubiquinol + NAD(+) + 4 H(+)(out). Its function is as follows. Core subunit of the mitochondrial membrane respiratory chain NADH dehydrogenase (Complex I) that is believed to belong to the minimal assembly required for catalysis. Complex I functions in the transfer of electrons from NADH to the respiratory chain. The immediate electron acceptor for the enzyme is believed to be ubiquinone. The chain is NADH-ubiquinone oxidoreductase chain 3 (NAD3) from Prototheca wickerhamii.